Consider the following 203-residue polypeptide: Holliday junction branch migration complex subunit RuvA (203 aa).

Positions 1–63 (MIAFVSGPVA…EDSLTLYGFV (63 aa)) are domain I. The segment at 64-141 (DDDERQVFEL…GEPLGTGGPA (78 aa)) is domain II. The segment at 141–145 (AIGRA) is flexible linker. A domain III region spans residues 146–203 (VTTGWREQLHAALIGLGYATREADEAVAAVAPQAEAAGGTPQVGQLLKAALQTLNRTR).

This sequence belongs to the RuvA family. As to quaternary structure, homotetramer. Forms an RuvA(8)-RuvB(12)-Holliday junction (HJ) complex. HJ DNA is sandwiched between 2 RuvA tetramers; dsDNA enters through RuvA and exits via RuvB. An RuvB hexamer assembles on each DNA strand where it exits the tetramer. Each RuvB hexamer is contacted by two RuvA subunits (via domain III) on 2 adjacent RuvB subunits; this complex drives branch migration. In the full resolvosome a probable DNA-RuvA(4)-RuvB(12)-RuvC(2) complex forms which resolves the HJ.

It is found in the cytoplasm. Its function is as follows. The RuvA-RuvB-RuvC complex processes Holliday junction (HJ) DNA during genetic recombination and DNA repair, while the RuvA-RuvB complex plays an important role in the rescue of blocked DNA replication forks via replication fork reversal (RFR). RuvA specifically binds to HJ cruciform DNA, conferring on it an open structure. The RuvB hexamer acts as an ATP-dependent pump, pulling dsDNA into and through the RuvAB complex. HJ branch migration allows RuvC to scan DNA until it finds its consensus sequence, where it cleaves and resolves the cruciform DNA. This is Holliday junction branch migration complex subunit RuvA from Streptomyces avermitilis (strain ATCC 31267 / DSM 46492 / JCM 5070 / NBRC 14893 / NCIMB 12804 / NRRL 8165 / MA-4680).